We begin with the raw amino-acid sequence, 1340 residues long: Thioester-containing protein 1 allele S1 (1340 aa).

Residues 1–21 (MWQFIRSRILTVIIFIGAAHG) form the signal peptide. Asn68, Asn199, Asn242, Asn312, and Asn481 each carry an N-linked (GlcNAc...) asparagine glycan. Positions 580-609 (ENEFDIFHSLGLFARTLDDILFDSANEKTG) are may contain the cleavage site. Residues Asn637, Asn728, Asn813, and Asn828 are each glycosylated (N-linked (GlcNAc...) asparagine). Positions 859–862 (CGEQ) form a cross-link, isoglutamyl cysteine thioester (Cys-Gln). 3 disulfides stabilise this stretch: Cys1217-Cys1283, Cys1326-Cys1338, and Cys1329-Cys1334.

Heterodimer of a TEP1-N chain and an TEP1-C chain non-covalently linked. Forms a complex composed of TEP1-N and TEP1-C heterodimer, LRIM1 and APL1C; the interaction stabilizes TEP1-N and TEP1-C heterodimer, prevents its binding to tissues while circulating in the hemolymph and protects the thioester bond from hydrolysis. Mature TEP1 and to a lesser extent full-length TEP1 interact with SPCLIP1; the interaction is induced by microbial infection. Post-translationally, in the hemolymph, the full-length protein is cleaved by an unknow protease into a 75kDa N-terminal (TEP1-N) chain and an 80kDa C-terminal (TEP1-C) chain which remain non-covalently linked. The TEP1-C chain contains the thioester bond which covalently binds to the pathogen surface. Cleavage is induced by bacterial infection or aseptic wound injury. During embryonic and pupal development, the cleaved form is the predominant form. In terms of processing, N-glycosylated. In terms of tissue distribution, specifically expressed in hemocytes (at protein level).

The protein localises to the secreted. In terms of biological role, plays an essential role in the innate immune response to bacteria and protozoa infection. After proteolytic cleavage, the protein C-terminus binds covalently through a thioester bond to the pathogen surface resulting in pathogen clearance either by melanization or lysis. Initiate the recruitment and activation of a cascade of proteases, mostly of CLIP-domain serine proteases, which leads to the proteolytic cleavage of the prophenoloxidase (PPO) into active phenoloxidase (PO), the rate-limiting enzyme in melanin biosynthesis. In response to parasite P.berghei-mediated infection, binds to and mediates killing of ookinetes, as they egress from midgut epithelial cells into the basal labyrinth, by both lysis and melanization. During bacterial infection, binds to both Gram-positive and Gram-negative bacteria but only promotes phagocytosis of Gram-negative bacteria. Promotes the accumulation of SPCLIP1 onto the surface of P.berghei ookinetes and bacterium E.coli which leads to the melanization of the pathogen. Recruits CLIPA2 to bacteria surface. In response to bacterial infection, required for periostial hemocyte aggregation, but not for the aggregation of sessile hemocytes in non-periostial regions. During the late stage of fungus B.bassiana-mediated infection, required for the initiation of hyphae melanization by binding to the surface of hyphae and recruiting prophenoloxidase PPO to them. Plays a role in male fertility by binding to defective sperm cells and promoting their removal during spermatogenesis. Binds covalently through a thioester bond to the pathogen surface resulting in pathogen clearance. This is Thioester-containing protein 1 allele S1 from Anopheles gambiae (African malaria mosquito).